The following is a 155-amino-acid chain: Small ribosomal subunit protein uS7 (155 aa).

It belongs to the universal ribosomal protein uS7 family. Part of the 30S ribosomal subunit. Contacts proteins S9 and S11.

One of the primary rRNA binding proteins, it binds directly to 16S rRNA where it nucleates assembly of the head domain of the 30S subunit. Is located at the subunit interface close to the decoding center, probably blocks exit of the E-site tRNA. This is Small ribosomal subunit protein uS7 from Helicobacter pylori (strain Shi470).